The primary structure comprises 272 residues: uncharacterized protein (272 aa).

The segment at 193-250 (AFLLPNNSKGVEKSEENEDGVTDNDSSNVNSSTNESPNPTDINVCSNDDATDNTENNL) is disordered. Residues 215-233 (DNDSSNVNSSTNESPNPTD) show a composition bias toward low complexity. A compositionally biased stretch (polar residues) spans 235–248 (NVCSNDDATDNTEN).

It belongs to the pal1 family.

It localises to the cytoplasm. The protein localises to the nucleus. This is an uncharacterized protein from Schizosaccharomyces pombe (strain 972 / ATCC 24843) (Fission yeast).